Here is a 60-residue protein sequence, read N- to C-terminus: Large ribosomal subunit protein bL32 (60 aa).

It belongs to the bacterial ribosomal protein bL32 family.

The protein is Large ribosomal subunit protein bL32 of Ehrlichia ruminantium (strain Gardel).